Consider the following 548-residue polypeptide: MAQLSGQPVVILPEGTQRYVGRDAQRLNILAARIIAETVRTTLGPKGMDKMLVDSLGDIVVTNDGATILDKIDLQHPAAKMMVEVAKTQDKEAGDGTTTAVVIAGELLRKAEELLDQNIHPSIIIKGYALAAEKAQEILDEIAIRVDPDDEETLLKIAATSITGKNAESHKELLAKLAVEAVKQVAEKKDGKYVVDLDNIKFEKKAGEGVEESELVRGVVIDKEVVHPRMPKRVENAKIALINEALEVKKTETDAKINITSPDQLMSFLEQEEKMLKDMVDHIAQTGANVVFVQKGIDDLAQHYLAKYGIMAVRRVKKSDMEKLAKATGAKIVTNVKDLTPEDLGYAEVVEERKLAGENMIFVEGCKNPKAVTILIRGGTEHVIDEVERALEDAVKVVKDVMEDGAVLPAGGAPEIELAIRLDEYAKQVGGKEALAIENFADALKIIPKTLAENAGLDTVEMLVKVISEHKNRGLGIGIDVFEGKPADMLEKGIIEPLRVKKQAIKSASEAAIMILRIDDVIAAKATKPEGGQGGGMPGGMGGMDMGM.

Positions 527–548 (TKPEGGQGGGMPGGMGGMDMGM) are disordered. A compositionally biased stretch (gly residues) spans 531-548 (GGQGGGMPGGMGGMDMGM).

Belongs to the TCP-1 chaperonin family. In terms of assembly, forms a Heterooligomeric complex of two stacked eight-membered rings.

Functionally, molecular chaperone; binds unfolded polypeptides in vitro, and has a weak ATPase activity. In Thermococcus sp. (strain JCM 11816 / KS-1), this protein is Thermosome subunit alpha (thsA).